Consider the following 1499-residue polypeptide: B-cell CLL/lymphoma 9-like protein (1499 aa).

Disordered regions lie at residues 1–238 and 271–500; these read MRIL…PPSQ and VPRA…MGQQ. Pro residues predominate over residues 20–37; that stretch reads GSPPLSPRGHCPPAPAKP. Phosphoserine is present on residues Ser21 and Ser25. The residue at position 36 (Lys36) is an N6-acetyllysine. 2 stretches are compositionally biased toward polar residues: residues 45 to 70 and 85 to 96; these read TNHG…TCNV and NQISPSNSSLKN. Position 88 is a phosphoserine (Ser88). Residues Lys108 and Lys110 each carry the N6-acetyllysine modification. Basic and acidic residues-rich tracts occupy residues 114 to 126 and 134 to 153; these read DRSV…EQRE and SEAK…ERKQ. A phosphoserine mark is found at Ser116 and Ser118. Lys137 carries the N6-acetyllysine modification. The segment covering 193–205 has biased composition (polar residues); sequence PGQTTQLPLSESS. Residues 222–232 show a composition bias toward gly residues; sequence PGGGGGGGGVP. 2 stretches are compositionally biased toward pro residues: residues 281–291 and 301–325; these read KVPPTPEPLPL and SQPP…PPEG. The segment at 304–533 is necessary for interaction with CTNNB1; the sequence is PPLPPPPPPA…QEEYYEEKRR (230 aa). Composition is skewed to low complexity over residues 351–363 and 370–387; these read THPN…TANN and DPSS…AAPG. Residues 399 to 421 show a composition bias toward basic and acidic residues; the sequence is LSKEQLEHRERSLQTLRDIERLL. A Phosphoserine modification is found at Ser424. Positions 445 to 458 are enriched in pro residues; the sequence is AQAPPPPQQPPTAP. Thr514 carries the post-translational modification Phosphothreonine. Arg680 bears the Asymmetric dimethylarginine mark. 14 positions are modified to phosphoserine: Ser750, Ser813, Ser915, Ser926, Ser938, Ser942, Ser947, Ser975, Ser987, Ser991, Ser997, Ser1004, Ser1010, and Ser1017. Disordered regions lie at residues 888–1084 and 1116–1201; these read SHMP…QNPL and ELLP…PQNS. Over residues 935-960 the composition is skewed to polar residues; the sequence is PTLSQVHSPLVTSPSANLKSPQTPSQ. Residues 978–996 show a composition bias toward polar residues; sequence VLGSSLSVRSPTGSPSRLK. 2 stretches are compositionally biased toward polar residues: residues 1019–1041 and 1069–1084; these read GVSQ…NMEQ and LPFT…QNPL. 2 stretches are compositionally biased toward pro residues: residues 1122 to 1132 and 1168 to 1179; these read PLLPPPPPPQG and HEPPPAMLPSPT. Residue Lys1344 forms a Glycyl lysine isopeptide (Lys-Gly) (interchain with G-Cter in SUMO2) linkage.

This sequence belongs to the BCL9 family. In terms of assembly, found in a complex with CDC73; CTNNB1 and PYGO1. Interacts with CTNNB1. As to expression, expressed in breast, ductal and invasive ductal carcinomas of the breast, sporadic colorectal adenomas and carcinomas (at protein level). Expressed in fetal brain. Expressed in lung, amygdala, eye, prostate, pancreatic and prostate cancers, head and neck tumors and embryonal tumor.

Its subcellular location is the nucleus. In terms of biological role, transcriptional regulator that acts as an activator. Promotes beta-catenin transcriptional activity. Plays a role in tumorigenesis. Enhances the neoplastic transforming activity of CTNNB1. The chain is B-cell CLL/lymphoma 9-like protein (BCL9L) from Homo sapiens (Human).